The sequence spans 136 residues: Large ribosomal subunit protein uL16c (136 aa).

The protein belongs to the universal ribosomal protein uL16 family. In terms of assembly, part of the 50S ribosomal subunit.

The protein localises to the plastid. The protein resides in the chloroplast. The sequence is that of Large ribosomal subunit protein uL16c from Saccharum hybrid (Sugarcane).